The following is a 284-amino-acid chain: MDAIKKKMQMLKLDKENALDRAEQAEADKKGAEDKSKQLEDELVAMQKKMKGTEDELDKYSEALKDAQEKLELAEKKATDAEADVASLNRRIQLVEEELDRAQERLATALQKLEEAEKAADESERGMKVIENRALKDEEKIELQEIQLKEAKHIAEEADRKYEEVARKLVIIEGDLERAEERAELSESKCAELEEELKTVTNNLKSLEAQAEKYSQKEDKYEEEIKVLTDKLKEAETRAEFAERTVAKLEKSIDDLEDELYAQKLKYKAISEELDHALNDMTSI.

Positions 1 to 40 (MDAIKKKMQMLKLDKENALDRAEQAEADKKGAEDKSKQLE) are disordered. Residues 1–284 (MDAIKKKMQM…DHALNDMTSI (284 aa)) adopt a coiled-coil conformation. The segment covering 12–40 (KLDKENALDRAEQAEADKKGAEDKSKQLE) has biased composition (basic and acidic residues).

The protein belongs to the tropomyosin family. As to quaternary structure, homodimer. Heterodimer of an alpha (TPM1, TPM3 or TPM4) and a beta (TPM2) chain.

It localises to the cytoplasm. It is found in the cytoskeleton. Binds to actin filaments in muscle and non-muscle cells. Plays a central role, in association with the troponin complex, in the calcium dependent regulation of vertebrate striated muscle contraction. Smooth muscle contraction is regulated by interaction with caldesmon. In non-muscle cells is implicated in stabilizing cytoskeleton actin filaments. This is Tropomyosin alpha-1 chain (tpm1) from Rana temporaria (European common frog).